The sequence spans 261 residues: Complex I assembly factor TIMMDC1, mitochondrial (261 aa).

3 helical membrane-spanning segments follow: residues 67-87 (LNSV…YGGV), 131-151 (WGWR…CMSV), and 183-203 (AGGI…LLLM).

Belongs to the Tim17/Tim22/Tim23 family. As to quaternary structure, associates with complex I assembly intermediates during its biogenesis in a NdufAF3 and NdufAF4 dependent manner.

Its subcellular location is the membrane. Chaperone protein involved in the assembly of the mitochondrial NADH:ubiquinone oxidoreductase complex (complex I). Essential for viability. The protein is Complex I assembly factor TIMMDC1, mitochondrial of Drosophila melanogaster (Fruit fly).